Consider the following 277-residue polypeptide: uncharacterized protein (277 aa).

Disordered stretches follow at residues 1–103 (PPLR…LEDP) and 254–277 (PSPS…SPPR). Over residues 48-65 (RRNDTGKDRGTHRQRAET) the composition is skewed to basic and acidic residues. A compositionally biased stretch (polar residues) spans 66 to 77 (PSRSPVPTTNTV). Residues 82 to 91 (PAVRRQRRTQ) show a composition bias toward basic residues.

This is an uncharacterized protein from Homo sapiens (Human).